A 257-amino-acid chain; its full sequence is MSQPVKIAIAGANGRMGRAVAQALEGRSDAVVAARFERPGDAGEGLVARETALAAAEAVIDFTLPEASVALAEEAAANGGPALVIGSTGFSDEQLDRIDAAATKIVIVRSGNYSLGVNMLMGLVRQAAAALPAQDWDIEVFEAHHKRKIDAPSGTALMLGEAAAEGRGINLAKVSDRGRDGVTGPRKDGDIGFSVVRGGGIIGEHSVIFAGESESLTLSHSAIDRGLFARGAIAAAVWVKGKPPGLYDMQDVLGFKK.

NAD(+) is bound by residues 11 to 16 (GANGRM) and Glu-37. Arg-38 contacts NADP(+). NAD(+)-binding positions include 86 to 88 (GST) and 110 to 113 (SGNY). The active-site Proton donor/acceptor is the His-144. His-145 serves as a coordination point for (S)-2,3,4,5-tetrahydrodipicolinate. Catalysis depends on Lys-148, which acts as the Proton donor. A (S)-2,3,4,5-tetrahydrodipicolinate-binding site is contributed by 154–155 (GT).

Belongs to the DapB family.

The protein localises to the cytoplasm. It carries out the reaction (S)-2,3,4,5-tetrahydrodipicolinate + NAD(+) + H2O = (2S,4S)-4-hydroxy-2,3,4,5-tetrahydrodipicolinate + NADH + H(+). The enzyme catalyses (S)-2,3,4,5-tetrahydrodipicolinate + NADP(+) + H2O = (2S,4S)-4-hydroxy-2,3,4,5-tetrahydrodipicolinate + NADPH + H(+). Its pathway is amino-acid biosynthesis; L-lysine biosynthesis via DAP pathway; (S)-tetrahydrodipicolinate from L-aspartate: step 4/4. Its function is as follows. Catalyzes the conversion of 4-hydroxy-tetrahydrodipicolinate (HTPA) to tetrahydrodipicolinate. This chain is 4-hydroxy-tetrahydrodipicolinate reductase, found in Caulobacter vibrioides (strain ATCC 19089 / CIP 103742 / CB 15) (Caulobacter crescentus).